Reading from the N-terminus, the 285-residue chain is Polyamine aminopropyltransferase (285 aa).

Residues 5–241 (DSWFTEHFQA…GWWSVTLSSK (237 aa)) enclose the PABS domain. Gln35 is a binding site for S-methyl-5'-thioadenosine. 2 residues coordinate spermidine: His66 and Asp90. Residues Asp110 and 141–142 (DG) contribute to the S-methyl-5'-thioadenosine site. The active-site Proton acceptor is the Asp160. 160–163 (DSTD) lines the spermidine pocket. S-methyl-5'-thioadenosine is bound at residue Pro167.

Belongs to the spermidine/spermine synthase family. Homodimer or homotetramer.

The protein localises to the cytoplasm. The enzyme catalyses S-adenosyl 3-(methylsulfanyl)propylamine + putrescine = S-methyl-5'-thioadenosine + spermidine + H(+). It functions in the pathway amine and polyamine biosynthesis; spermidine biosynthesis; spermidine from putrescine: step 1/1. Functionally, catalyzes the irreversible transfer of a propylamine group from the amino donor S-adenosylmethioninamine (decarboxy-AdoMet) to putrescine (1,4-diaminobutane) to yield spermidine. The sequence is that of Polyamine aminopropyltransferase from Xylella fastidiosa (strain 9a5c).